Consider the following 476-residue polypeptide: Ribulose bisphosphate carboxylase large chain (476 aa).

2 residues coordinate substrate: N124 and T174. K176 functions as the Proton acceptor in the catalytic mechanism. Residue K178 participates in substrate binding. The Mg(2+) site is built by K202, D204, and E205. Position 202 is an N6-carboxylysine (K202). H295 (proton acceptor) is an active-site residue. Substrate is bound by residues R296, H328, and S380.

It belongs to the RuBisCO large chain family. Type I subfamily. Heterohexadecamer of 8 large chains and 8 small chains; disulfide-linked. The disulfide link is formed within the large subunit homodimers. The cofactor is Mg(2+). In terms of processing, the disulfide bond which can form in the large chain dimeric partners within the hexadecamer appears to be associated with oxidative stress and protein turnover.

The protein localises to the carboxysome. It catalyses the reaction 2 (2R)-3-phosphoglycerate + 2 H(+) = D-ribulose 1,5-bisphosphate + CO2 + H2O. The enzyme catalyses D-ribulose 1,5-bisphosphate + O2 = 2-phosphoglycolate + (2R)-3-phosphoglycerate + 2 H(+). Its function is as follows. RuBisCO catalyzes two reactions: the carboxylation of D-ribulose 1,5-bisphosphate, the primary event in carbon dioxide fixation, as well as the oxidative fragmentation of the pentose substrate in the photorespiration process. Both reactions occur simultaneously and in competition at the same active site. The protein is Ribulose bisphosphate carboxylase large chain of Cyanothece sp. (strain PCC 7425 / ATCC 29141).